The following is a 449-amino-acid chain: Heterogeneous nuclear ribonucleoprotein H2 (449 aa).

Met1 is subject to N-acetylmethionine. At Met2 the chain carries N-acetylmethionine; in Heterogeneous nuclear ribonucleoprotein H2, N-terminally processed. The region spanning 11 to 90 (FVVKVRGLPW…RYVEVFKSNS (80 aa)) is the RRM 1 domain. Ser23 is modified (phosphoserine). Lys35 participates in a covalent cross-link: Glycyl lysine isopeptide (Lys-Gly) (interchain with G-Cter in SUMO2). Phosphoserine occurs at positions 54 and 63. Residue Lys87 forms a Glycyl lysine isopeptide (Lys-Gly) (interchain with G-Cter in SUMO2) linkage. Phosphoserine is present on Ser90. A Glycyl lysine isopeptide (Lys-Gly) (interchain with G-Cter in SUMO2) cross-link involves residue Lys98. The region spanning 111–188 (GFVRLRGLPF…RYIEIFKSSR (78 aa)) is the RRM 2 domain. The residue at position 233 (Arg233) is a Dimethylated arginine; alternate. Arg233 carries the post-translational modification Omega-N-methylarginine; alternate. Residues 234–249 (GAYGGGYGGYDDYGGY) form a 1-1 repeat. The interval 234–433 (GAYGGGYGGY…YGGQSSMSGY (200 aa)) is 2 X 16 AA Gly-rich approximate repeats. At Tyr246 the chain carries Phosphotyrosine. Residues 289–364 (HCVHMRGLPY…RYVELFLNST (76 aa)) form the RRM 3 domain. Ser310 is subject to Phosphoserine. 3 repeat units span residues 354–372 (HRYVELFLNSTAGTSGGAY), 374–392 (HSYVELFLNSTAGASGGAY), and 418–433 (GGYGGGYGGQSSMSGY). Residues 354–392 (HRYVELFLNSTAGTSGGAYDHSYVELFLNSTAGASGGAY) form a 2 X 19 AA perfect repeats region.

In terms of assembly, component of a ribonucleoprotein complex containing mRNAs and RNA-binding proteins including DDX5, HNRNPH2 and SRSF1 as well as splicing regulator ARVCF. Interacts with TXNL4/DIM1. In terms of tissue distribution, expressed ubiquitously.

The protein localises to the nucleus. The protein resides in the nucleoplasm. Its function is as follows. This protein is a component of the heterogeneous nuclear ribonucleoprotein (hnRNP) complexes which provide the substrate for the processing events that pre-mRNAs undergo before becoming functional, translatable mRNAs in the cytoplasm. Binds poly(RG). This Homo sapiens (Human) protein is Heterogeneous nuclear ribonucleoprotein H2 (HNRNPH2).